A 251-amino-acid chain; its full sequence is Hydroxyacylglutathione hydrolase (251 aa).

Residues histidine 53, histidine 55, aspartate 57, histidine 58, histidine 110, aspartate 127, and histidine 165 each coordinate Zn(2+).

The protein belongs to the metallo-beta-lactamase superfamily. Glyoxalase II family. As to quaternary structure, monomer. Requires Zn(2+) as cofactor.

The enzyme catalyses an S-(2-hydroxyacyl)glutathione + H2O = a 2-hydroxy carboxylate + glutathione + H(+). The protein operates within secondary metabolite metabolism; methylglyoxal degradation; (R)-lactate from methylglyoxal: step 2/2. Functionally, thiolesterase that catalyzes the hydrolysis of S-D-lactoyl-glutathione to form glutathione and D-lactic acid. This is Hydroxyacylglutathione hydrolase from Enterobacter sp. (strain 638).